The chain runs to 573 residues: MRTAEAFDNIYLDLSKQPGKCKLAESGLGWRPSGGGETFTLDSNNIGAAQWSRAAKGYELKILSRSSGVIQLDGFDQEDFERLSKAFKIWYGINVENREHALRGWNWGKAEFTKAELAFNVQNRPAFEIPYSEISNTNLAGKNEVAVEFALTSDGDANAQPSGSTKNRGRKAAAGPDELVEMRFYIPGTAVKTEKGIKTENDENGEEEEEGEEQNAANLFYETLMEKAEIGDVAGDTFATFLDVLHLTPRGRFDIDMYESSFRLRGKTYDYKIQYASIKKFFLLPKNDEMHTLIVLGLDPPLRQGQTRYPFLVMQLKLDEEISLELNMTEELLESRYKDKLEPRYEEPIHQVVTKIFRGLSGKKVIMPSKDFVSHHGHSGVKCSIKANEGLLYFLDKSLIFVPKPATYVQIENIAVITMSRVGGAVSASRTFDITVTLKAGMGEHQFSNINREEQQPLEEFFKAKNIRFKNEMSDDTSALIAAALDNDDMMSSDEDGGRADRGSADEDEESVDEDFQAESESDVAEEFDSEHESSGSASDAEMDDASDAGDDEEDVDMSEEEERPKKKSKIGK.

Disordered stretches follow at residues 153-174 (SDGDANAQPSGSTKNRGRKAAA) and 485-573 (LDND…KIGK). Acidic residues predominate over residues 486 to 495 (DNDDMMSSDE). The span at 496–505 (DGGRADRGSA) shows a compositional bias: basic and acidic residues. Acidic residues-rich tracts occupy residues 506–530 (DEDEESVDEDFQAESESDVAEEFDS) and 541–562 (AEMDDASDAGDDEEDVDMSEEE).

Belongs to the SSRP1 family. Forms a stable heterodimer with spt16. The spt16-pob3 dimer weakly associates with multiple molecules of nhp6 to form the FACT complex.

It is found in the nucleus. Its subcellular location is the chromosome. Its function is as follows. Component of the FACT complex, a general chromatin factor that acts to reorganize nucleosomes. The FACT complex is involved in multiple processes that require DNA as a template such as mRNA elongation, DNA replication and DNA repair. During transcription elongation the FACT complex acts as a histone chaperone that both destabilizes and restores nucleosomal structure. It facilitates the passage of RNA polymerase II and transcription by promoting the dissociation of one histone H2A-H2B dimer from the nucleosome, then subsequently promotes the reestablishment of the nucleosome following the passage of RNA polymerase II. In Aspergillus fumigatus (strain ATCC MYA-4609 / CBS 101355 / FGSC A1100 / Af293) (Neosartorya fumigata), this protein is FACT complex subunit pob3 (pob3).